We begin with the raw amino-acid sequence, 777 residues long: Reticulon-1 (777 aa).

Disordered regions lie at residues 1–77 (MAAP…ETAS), 129–182 (NGHI…ILAD), 198–245 (TRPQ…PVEG), and 293–573 (ATHE…IPGP). Ser13 and Ser68 each carry phosphoserine. The span at 199–233 (RPQEAKGQEEQSPGLEDKDLDFKDKDSEVSTKPEG) shows a compositional bias: basic and acidic residues. A phosphoserine mark is found at Ser210, Ser241, and Ser325. The segment covering 326 to 339 (PGSVTPPSSGTEPS) has biased composition (low complexity). 2 positions are modified to phosphoserine: Ser348 and Ser350. Residues 393–406 (IPSSLDQEASSAES) show a composition bias toward polar residues. Phosphoserine is present on Ser485. Residues 495 to 510 (AIREETSSRATEERAP) show a composition bias toward basic and acidic residues. Positions 525 to 534 (TPVTLQSRPE) are enriched in polar residues. The region spanning 590-777 (AIDLLYWRDI…KIPGAKRHAE (188 aa)) is the Reticulon domain. 2 helical membrane-spanning segments follow: residues 604–624 (IVFG…VVSV) and 706–726 (FAVL…LTLL).

Interacts with NDRG1. Interacts with BACE1. Interacts with TMEM33. In terms of assembly, interacts with UGCG; regulates the ceramide glucosyltransferase activity of UGCG. Expressed predominantly in central and peripheral nervous system of newborn and adult rats. Low levels have been also detected in heart, adrenal gland and spleen. Expression of isoform RTN1-B is restricted to particular neuronal types.

The protein localises to the endoplasmic reticulum membrane. The protein resides in the golgi apparatus membrane. Functionally, inhibits amyloid precursor protein processing, probably by blocking BACE1 activity. In Rattus norvegicus (Rat), this protein is Reticulon-1 (Rtn1).